We begin with the raw amino-acid sequence, 127 residues long: Major sperm protein isoform alpha (127 aa).

Ala2 bears the N-acetylalanine mark. The region spanning 9–126 (DINTQPSQKI…RRKNLPIEYN (118 aa)) is the MSP domain.

In terms of assembly, forms filaments 10 nm wide, with a characteristic substructure repeating axially at 9 nm. Sperm.

Its subcellular location is the cell projection. The protein resides in the pseudopodium. It is found in the cytoplasm. It localises to the cytoskeleton. Central component in molecular interactions underlying sperm crawling. Forms an extensive filament system that extends from sperm villipoda, along the leading edge of the pseudopod. The sequence is that of Major sperm protein isoform alpha from Ascaris suum (Pig roundworm).